A 465-amino-acid polypeptide reads, in one-letter code: Cytochrome P450 85A1 (465 aa).

The chain crosses the membrane as a helical span at residues 2 to 22 (GAMMVMMGLLLIIVSLCSALL). A heme-binding site is contributed by Cys-415.

This sequence belongs to the cytochrome P450 family. It depends on heme as a cofactor. Mainly expressed in apical shoots, hypocotyls, siliques and roots. Also present in the female gametophyte.

It localises to the membrane. The catalysed reaction is 6-deoxoteasterone + reduced [NADPH--hemoprotein reductase] + O2 = 6alpha-hydroxyteasterone + oxidized [NADPH--hemoprotein reductase] + H2O + H(+). It catalyses the reaction 6alpha-hydroxytyphasterol + reduced [NADPH--hemoprotein reductase] + O2 = teasterone + oxidized [NADPH--hemoprotein reductase] + 2 H2O + H(+). The enzyme catalyses 3-dehydro-6-deoxoteasterone + reduced [NADPH--hemoprotein reductase] + O2 = 3-dehydro-6alpha-hydroxyteasterone + oxidized [NADPH--hemoprotein reductase] + H2O + H(+). It carries out the reaction 3-dehydro-6alpha-hydroxyteasterone + reduced [NADPH--hemoprotein reductase] + O2 = 3-dehydroteasterone + oxidized [NADPH--hemoprotein reductase] + 2 H2O + H(+). The catalysed reaction is 6-deoxotyphasterol + reduced [NADPH--hemoprotein reductase] + O2 = 6alpha-hydroxytyphasterol + oxidized [NADPH--hemoprotein reductase] + H2O + H(+). It catalyses the reaction 6alpha-hydroxytyphasterol + reduced [NADPH--hemoprotein reductase] + O2 = typhasterol + oxidized [NADPH--hemoprotein reductase] + 2 H2O + H(+). The enzyme catalyses 6-deoxocastasterone + reduced [NADPH--hemoprotein reductase] + O2 = 6alpha-hydroxycastasterone + oxidized [NADPH--hemoprotein reductase] + H2O + H(+). It carries out the reaction 6alpha-hydroxycastasterone + reduced [NADPH--hemoprotein reductase] + O2 = castasterone + oxidized [NADPH--hemoprotein reductase] + 2 H2O + H(+). The catalysed reaction is 6-deoxocastasterone + 2 reduced [NADPH--hemoprotein reductase] + 2 O2 = castasterone + 2 oxidized [NADPH--hemoprotein reductase] + 3 H2O + 2 H(+). It catalyses the reaction 6-deoxoteasterone + 2 reduced [NADPH--hemoprotein reductase] + 2 O2 = teasterone + 2 oxidized [NADPH--hemoprotein reductase] + 3 H2O + 2 H(+). The enzyme catalyses 6-deoxotyphasterol + 2 reduced [NADPH--hemoprotein reductase] + 2 O2 = typhasterol + 2 oxidized [NADPH--hemoprotein reductase] + 3 H2O + 2 H(+). It carries out the reaction 3-dehydro-6-deoxoteasterone + 2 reduced [NADPH--hemoprotein reductase] + 2 O2 = 3-dehydroteasterone + 2 oxidized [NADPH--hemoprotein reductase] + 3 H2O + 2 H(+). Its pathway is plant hormone biosynthesis; brassinosteroid biosynthesis. Catalyzes the C6-oxidation step in brassinosteroids biosynthesis. Converts 6-deoxocastasterone (6-deoxoCS) to castasterone (CS). May also convert 6-deoxoteasterone (6-deoxoTE) to teasterone (TE), 3-dehydro-6-deoxoteasterone (6-deoxo3DT, 6-deoxo-3-DHT) to 3-dehydroteasterone (3DT, 3-DHT), and 6-deoxotyphasterol (6-deoxoTY) to typhasterol (TY). Required for the initiation of female gametogenesis (megagametogenesis). In Arabidopsis thaliana (Mouse-ear cress), this protein is Cytochrome P450 85A1.